We begin with the raw amino-acid sequence, 400 residues long: Subtilisin-like protease 7 (400 aa).

An N-terminal signal peptide occupies residues 1 to 20; the sequence is MGFITKAIPLALAAASVING. A propeptide spanning residues 21 to 119 is cleaved from the precursor; the sequence is AEIMETRAGV…IERDARVQIN (99 aa). Positions 36 to 118 constitute an Inhibitor I9 domain; the sequence is KYIVVMNDGM…YIERDARVQI (83 aa). Asn58 carries an N-linked (GlcNAc...) asparagine glycan. The Peptidase S8 domain occupies 129 to 400; sequence SWGLARVGSK…SKLINNGSGM (272 aa). Active-site charge relay system residues include Asp161 and His192. 2 N-linked (GlcNAc...) asparagine glycosylation sites follow: Asn222 and Asn252. Ser346 acts as the Charge relay system in catalysis. Asn396 carries an N-linked (GlcNAc...) asparagine glycan.

This sequence belongs to the peptidase S8 family.

The protein resides in the secreted. Secreted subtilisin-like serine protease with keratinolytic activity that contributes to pathogenicity. The polypeptide is Subtilisin-like protease 7 (SUB7) (Arthroderma benhamiae (Trichophyton mentagrophytes)).